A 258-amino-acid polypeptide reads, in one-letter code: Ribosomal RNA small subunit methyltransferase A (258 aa).

S-adenosyl-L-methionine is bound by residues H13, L15, G40, E61, D86, and N106.

The protein belongs to the class I-like SAM-binding methyltransferase superfamily. rRNA adenine N(6)-methyltransferase family. RsmA subfamily.

Its subcellular location is the cytoplasm. It carries out the reaction adenosine(1518)/adenosine(1519) in 16S rRNA + 4 S-adenosyl-L-methionine = N(6)-dimethyladenosine(1518)/N(6)-dimethyladenosine(1519) in 16S rRNA + 4 S-adenosyl-L-homocysteine + 4 H(+). Specifically dimethylates two adjacent adenosines (A1518 and A1519) in the loop of a conserved hairpin near the 3'-end of 16S rRNA in the 30S particle. May play a critical role in biogenesis of 30S subunits. This Coxiella burnetii (strain RSA 331 / Henzerling II) protein is Ribosomal RNA small subunit methyltransferase A.